We begin with the raw amino-acid sequence, 379 residues long: SUN domain-containing protein 5 (379 aa).

The interval 1-45 (MPRSSRSPGDPGALLEDVAHNPRPRRIAQRGRNTSRMAEDTSPNM) is disordered. Residues 1–105 (MPRSSRSPGD…LLCQKLMEKT (105 aa)) are Nuclear-facing. Polar residues predominate over residues 31–45 (GRNTSRMAEDTSPNM). A helical membrane pass occupies residues 106-122 (GILLLCAFGFWMFSIHL). At 123–379 (PSKMKVWQDD…PHQNPYPKRD (257 aa)) the chain is on the perinuclear space side. Positions 141-182 (LRLYQEKVRHHSGEIQDLRGSMNQLIAKLQEMEAMSDEQKMA) form a coiled coil. In terms of domain architecture, SUN spans 205-364 (GASIDFEHTS…YRVRVHGSVA (160 aa)).

Probable homotrimer. Interacts with DNAJB13. In terms of processing, highly glycosylated in the Golgi apparatus during spermiogenesis. As to expression, sperm (at protein level). Widely expressed. Conflictingly shown to be specifically expressed in testis.

The protein localises to the nucleus inner membrane. It localises to the golgi apparatus. Plays an essential role in anchoring sperm head to the tail. Is responsible for the attachment of the coupling apparatus to the sperm nuclear envelope. In Homo sapiens (Human), this protein is SUN domain-containing protein 5 (SUN5).